Here is a 99-residue protein sequence, read N- to C-terminus: Protein Tat (99 aa).

The tract at residues 1-24 is interaction with human CREBBP; the sequence is MEVVDPKIDPWNHPGSQPETPCNN. The segment at 1–48 is transactivation; the sequence is MEVVDPKIDPWNHPGSQPETPCNNCYCKKCCFHCPLCFMKKGLGISYG. Residues C22, C25, and C27 each coordinate Zn(2+). Residues 22–37 are cysteine-rich; it reads CNNCYCKKCCFHCPLC. The residue at position 28 (K28) is an N6-acetyllysine; by host PCAF. Residues C30, H33, C34, and C37 each contribute to the Zn(2+) site. Positions 38–48 are core; sequence FMKKGLGISYG. Positions 47-99 are disordered; sequence YGRKKRRQRRRTPQGSKIHQDPVPKQPLSQTRGDPTGPEESKKKVESQTETDP. Residues 48–58 show a composition bias toward basic residues; it reads GRKKRRQRRRT. The Nuclear localization signal, RNA-binding (TAR), and protein transduction signature appears at 49 to 57; sequence RKKRRQRRR. Positions 49-86 are interaction with the host capping enzyme RNGTT; sequence RKKRRQRRRTPQGSKIHQDPVPKQPLSQTRGDPTGPEE. K50 and K51 each carry N6-acetyllysine; by host EP300 and GCN5L2. An asymmetric dimethylarginine; by host PRMT6 mark is found at R52 and R53. K71 is covalently cross-linked (Glycyl lysine isopeptide (Lys-Gly) (interchain with G-Cter in ubiquitin)). Positions 78–80 match the Cell attachment site motif; it reads RGD.

Belongs to the lentiviruses Tat family. Interacts with host CCNT1. Associates with the P-TEFb complex composed at least of Tat, P-TEFb (CDK9 and CCNT1), TAR RNA, RNA Pol II. Recruits the HATs CREBBP, TAF1/TFIID, EP300, PCAF and GCN5L2. Interacts with host KAT5/Tip60; this interaction targets the latter to degradation. Interacts with the host deacetylase SIRT1. Interacts with host capping enzyme RNGTT; this interaction stimulates RNGTT. Binds to host KDR, and to the host integrins ITGAV/ITGB3 and ITGA5/ITGB1. Interacts with host KPNB1/importin beta-1 without previous binding to KPNA1/importin alpha-1. Interacts with EIF2AK2. Interacts with host nucleosome assembly protein NAP1L1; this interaction may be required for the transport of Tat within the nucleus, since the two proteins interact at the nuclear rim. Interacts with host C1QBP/SF2P32; this interaction involves lysine-acetylated Tat. Interacts with the host chemokine receptors CCR2, CCR3 and CXCR4. Interacts with host DPP4/CD26; this interaction may trigger an anti-proliferative effect. Interacts with host LDLR. Interacts with the host extracellular matrix metalloproteinase MMP1. Interacts with host PRMT6; this interaction mediates Tat's methylation. Interacts with, and is ubiquitinated by MDM2/Hdm2. Interacts with host PSMC3 and HTATIP2. Interacts with STAB1; this interaction may overcome SATB1-mediated repression of IL2 and IL2RA (interleukin) in T cells by binding to the same domain than HDAC1. Interacts (when acetylated) with human CDK13, thereby increasing HIV-1 mRNA splicing and promoting the production of the doubly spliced HIV-1 protein Nef. Interacts with host TBP; this interaction modulates the activity of transcriptional pre-initiation complex. Interacts with host RELA. Interacts with host PLSCR1; this interaction negatively regulates Tat transactivation activity by altering its subcellular distribution. In terms of processing, asymmetrical arginine methylation by host PRMT6 seems to diminish the transactivation capacity of Tat and affects the interaction with host CCNT1. Post-translationally, acetylation by EP300, CREBBP, GCN5L2/GCN5 and PCAF regulates the transactivation activity of Tat. EP300-mediated acetylation of Lys-50 promotes dissociation of Tat from the TAR RNA through the competitive binding to PCAF's bromodomain. In addition, the non-acetylated Tat's N-terminus can also interact with PCAF. PCAF-mediated acetylation of Lys-28 enhances Tat's binding to CCNT1. Lys-50 is deacetylated by SIRT1. Polyubiquitination by host MDM2 does not target Tat to degradation, but activates its transactivation function and fosters interaction with CCNT1 and TAR RNA. In terms of processing, phosphorylated by EIF2AK2 on serine and threonine residues adjacent to the basic region important for TAR RNA binding and function. Phosphorylation of Tat by EIF2AK2 is dependent on the prior activation of EIF2AK2 by dsRNA.

The protein localises to the host nucleus. Its subcellular location is the host nucleolus. The protein resides in the host cytoplasm. It is found in the secreted. Its function is as follows. Transcriptional activator that increases RNA Pol II processivity, thereby increasing the level of full-length viral transcripts. Recognizes a hairpin structure at the 5'-LTR of the nascent viral mRNAs referred to as the transactivation responsive RNA element (TAR) and recruits the cyclin T1-CDK9 complex (P-TEFb complex) that will in turn hyperphosphorylate the RNA polymerase II to allow efficient elongation. The CDK9 component of P-TEFb and other Tat-activated kinases hyperphosphorylate the C-terminus of RNA Pol II that becomes stabilized and much more processive. Other factors such as HTATSF1/Tat-SF1, SUPT5H/SPT5, and HTATIP2 are also important for Tat's function. Besides its effect on RNA Pol II processivity, Tat induces chromatin remodeling of proviral genes by recruiting the histone acetyltransferases (HATs) CREBBP, EP300 and PCAF to the chromatin. This also contributes to the increase in proviral transcription rate, especially when the provirus integrates in transcriptionally silent region of the host genome. To ensure maximal activation of the LTR, Tat mediates nuclear translocation of NF-kappa-B by interacting with host RELA. Through its interaction with host TBP, Tat may also modulate transcription initiation. Tat can reactivate a latently infected cell by penetrating in it and transactivating its LTR promoter. In the cytoplasm, Tat is thought to act as a translational activator of HIV-1 mRNAs. In terms of biological role, extracellular circulating Tat can be endocytosed by surrounding uninfected cells via the binding to several surface receptors such as CD26, CXCR4, heparan sulfate proteoglycans (HSPG) or LDLR. Neurons are rarely infected, but they internalize Tat via their LDLR. Through its interaction with nuclear HATs, Tat is potentially able to control the acetylation-dependent cellular gene expression. Modulates the expression of many cellular genes involved in cell survival, proliferation or in coding for cytokines or cytokine receptors. Tat plays a role in T-cell and neurons apoptosis. Tat induced neurotoxicity and apoptosis probably contribute to neuroAIDS. Circulating Tat also acts as a chemokine-like and/or growth factor-like molecule that binds to specific receptors on the surface of the cells, affecting many cellular pathways. In the vascular system, Tat binds to ITGAV/ITGB3 and ITGA5/ITGB1 integrins dimers at the surface of endothelial cells and competes with bFGF for heparin-binding sites, leading to an excess of soluble bFGF. The sequence is that of Protein Tat from Homo sapiens (Human).